Consider the following 397-residue polypeptide: Elongation factor Tu (397 aa).

Positions 10 to 207 (KPHVNVGTIG…TLDSYIPEPV (198 aa)) constitute a tr-type G domain. Residues 19-26 (GHVDHGKT) form a G1 region. 19 to 26 (GHVDHGKT) is a GTP binding site. T26 contributes to the Mg(2+) binding site. The segment at 60 to 64 (GITIN) is G2. Y77 carries the post-translational modification Phosphotyrosine. Positions 81–84 (DCPG) are G3. Position 81-85 (81-85 (DCPGH)) interacts with GTP. Residue Y88 is modified to Phosphotyrosine. 136–139 (NKAD) provides a ligand contact to GTP. The G4 stretch occupies residues 136–139 (NKAD). Positions 174–176 (SAL) are G5.

It belongs to the TRAFAC class translation factor GTPase superfamily. Classic translation factor GTPase family. EF-Tu/EF-1A subfamily. As to quaternary structure, monomer.

It localises to the cytoplasm. The catalysed reaction is GTP + H2O = GDP + phosphate + H(+). GTP hydrolase that promotes the GTP-dependent binding of aminoacyl-tRNA to the A-site of ribosomes during protein biosynthesis. The polypeptide is Elongation factor Tu (Pseudomonas aeruginosa (strain UCBPP-PA14)).